The chain runs to 396 residues: S-adenosylmethionine synthase (396 aa).

Histidine 16 lines the ATP pocket. A Mg(2+)-binding site is contributed by aspartate 18. Residue glutamate 44 participates in K(+) binding. Glutamate 57 and glutamine 100 together coordinate L-methionine. A flexible loop region spans residues 100-110 (QSVDIAQGVDR). Residues 165 to 167 (DAK), aspartate 240, 246 to 247 (RK), alanine 263, and lysine 267 each bind ATP. L-methionine is bound at residue aspartate 240. Lysine 271 is a binding site for L-methionine.

Belongs to the AdoMet synthase family. Homotetramer; dimer of dimers. It depends on Mg(2+) as a cofactor. The cofactor is K(+).

Its subcellular location is the cytoplasm. The enzyme catalyses L-methionine + ATP + H2O = S-adenosyl-L-methionine + phosphate + diphosphate. The protein operates within amino-acid biosynthesis; S-adenosyl-L-methionine biosynthesis; S-adenosyl-L-methionine from L-methionine: step 1/1. Functionally, catalyzes the formation of S-adenosylmethionine (AdoMet) from methionine and ATP. The overall synthetic reaction is composed of two sequential steps, AdoMet formation and the subsequent tripolyphosphate hydrolysis which occurs prior to release of AdoMet from the enzyme. The polypeptide is S-adenosylmethionine synthase (Stutzerimonas stutzeri (strain A1501) (Pseudomonas stutzeri)).